The primary structure comprises 532 residues: Intercellular adhesion molecule 1 (532 aa).

The signal sequence occupies residues 1–27; the sequence is MAPSGPQPALPILVVLLGALLLGPGNA. The Extracellular segment spans residues 28–480; it reads QTSVFPPEVI…TVNVLSPRYE (453 aa). Ig-like C2-type domains follow at residues 41–103 and 128–193; these read GGSV…QSSA and GKNL…LDLR. The N-linked (GlcNAc...) asparagine glycan is linked to Asn47. Intrachain disulfides connect Cys48/Cys92 and Cys52/Cys96. N-linked (GlcNAc...) asparagine glycans are attached at residues Asn130 and Asn145. Cys135 and Cys186 are oxidised to a cystine. A Cell attachment site; atypical motif is present at residues 152 to 154; it reads RGE. N-linked (GlcNAc...) asparagine glycosylation is found at Asn183, Asn202, Asn267, Asn296, and Asn316. The 68-residue stretch at 230-297 folds into the Ig-like C2-type 3 domain; the sequence is DTQGTVVCSL…LLCGVMLGNQ (68 aa). A disulfide bridge links Cys237 with Cys290. Positions 325-378 constitute an Ig-like C2-type 4 domain; that stretch reads GTEVIVECEAHPRAKVMLNGVPAQPPGPRAQFLLKATPEDNGRSFSCSATLEVA. Cys332 and Cys371 form a disulfide bridge. N-linked (GlcNAc...) asparagine glycosylation is found at Asn385 and Asn406. 3 cysteine pairs are disulfide-bonded: Cys403–Cys419, Cys419–Cys457, and Cys431–Cys457. Positions 412–464 constitute an Ig-like C2-type 5 domain; the sequence is NSQQTPMCQAWGNPLPQLKCLKDGTFPLPIGQSVTVTRDLEGTYLCQARSTRG. A helical membrane pass occupies residues 481 to 503; it reads VVIIPVVAAAVILGTAGVATYLY. Residues 504 to 532 lie on the Cytoplasmic side of the membrane; sequence NRQRKIRKYRLQQAQNGTPMKPNTQATPP. The disordered stretch occupies residues 513–532; it reads RLQQAQNGTPMKPNTQATPP. The span at 515–532 shows a compositional bias: polar residues; that stretch reads QQAQNGTPMKPNTQATPP. 2 positions are modified to phosphothreonine: Thr521 and Thr530.

The protein belongs to the immunoglobulin superfamily. ICAM family. In terms of assembly, homodimer. Interacts with MUC1 and promotes cell aggregation in epithelial cells. Interacts with ARHGEF26/SGEF. Interacts (on T cell side) with CD81, CD247 and CD9 at immunological synapses between antigen-presenting cells and T cells. In terms of processing, monoubiquitinated, which is promoted by MARCH9 and leads to endocytosis.

It is found in the membrane. In terms of biological role, ICAM proteins are ligands for the leukocyte adhesion protein LFA-1 (integrin alpha-L/beta-2). During leukocyte trans-endothelial migration, ICAM1 engagement promotes the assembly of endothelial apical cups through ARHGEF26/SGEF and RHOG activation. The sequence is that of Intercellular adhesion molecule 1 (ICAM1) from Macaca mulatta (Rhesus macaque).